Here is a 308-residue protein sequence, read N- to C-terminus: Protoheme IX farnesyltransferase (308 aa).

9 consecutive transmembrane segments (helical) span residues 31-51, 60-80, 110-130, 131-151, 157-177, 185-205, 232-252, 253-273, and 285-305; these read VGIV…AFYF, LDIV…SCVI, ALWF…MTNL, TAAG…TMWS, VNTI…WTAV, AWVL…ALAI, IIIW…LGLP, IVIL…VGYR, and FVYS…FTLF.

It belongs to the UbiA prenyltransferase family. Protoheme IX farnesyltransferase subfamily. In terms of assembly, interacts with CtaA.

The protein resides in the cell membrane. It catalyses the reaction heme b + (2E,6E)-farnesyl diphosphate + H2O = Fe(II)-heme o + diphosphate. It participates in porphyrin-containing compound metabolism; heme O biosynthesis; heme O from protoheme: step 1/1. Its function is as follows. Converts heme B (protoheme IX) to heme O by substitution of the vinyl group on carbon 2 of heme B porphyrin ring with a hydroxyethyl farnesyl side group. In Bacillus licheniformis (strain ATCC 14580 / DSM 13 / JCM 2505 / CCUG 7422 / NBRC 12200 / NCIMB 9375 / NCTC 10341 / NRRL NRS-1264 / Gibson 46), this protein is Protoheme IX farnesyltransferase.